The primary structure comprises 422 residues: Serine--tRNA ligase (422 aa).

229–231 (TAE) provides a ligand contact to L-serine. Residue 260–262 (RKE) coordinates ATP. Residue glutamate 283 participates in L-serine binding. 347-350 (EISS) is an ATP binding site. Serine 383 is a binding site for L-serine.

It belongs to the class-II aminoacyl-tRNA synthetase family. Type-1 seryl-tRNA synthetase subfamily. As to quaternary structure, homodimer. The tRNA molecule binds across the dimer.

The protein localises to the cytoplasm. The enzyme catalyses tRNA(Ser) + L-serine + ATP = L-seryl-tRNA(Ser) + AMP + diphosphate + H(+). The catalysed reaction is tRNA(Sec) + L-serine + ATP = L-seryl-tRNA(Sec) + AMP + diphosphate + H(+). It functions in the pathway aminoacyl-tRNA biosynthesis; selenocysteinyl-tRNA(Sec) biosynthesis; L-seryl-tRNA(Sec) from L-serine and tRNA(Sec): step 1/1. Catalyzes the attachment of serine to tRNA(Ser). Is also able to aminoacylate tRNA(Sec) with serine, to form the misacylated tRNA L-seryl-tRNA(Sec), which will be further converted into selenocysteinyl-tRNA(Sec). The sequence is that of Serine--tRNA ligase from Geotalea uraniireducens (strain Rf4) (Geobacter uraniireducens).